A 284-amino-acid chain; its full sequence is Pantothenate synthetase (284 aa).

Residue 30 to 37 (MGNLHDGH) coordinates ATP. H37 functions as the Proton donor in the catalytic mechanism. Residue Q61 participates in (R)-pantoate binding. Position 61 (Q61) interacts with beta-alanine. Residue 149-152 (GEKD) coordinates ATP. A (R)-pantoate-binding site is contributed by Q155. ATP contacts are provided by residues V178 and 186 to 189 (LSSR).

Belongs to the pantothenate synthetase family. In terms of assembly, homodimer.

The protein resides in the cytoplasm. It carries out the reaction (R)-pantoate + beta-alanine + ATP = (R)-pantothenate + AMP + diphosphate + H(+). It functions in the pathway cofactor biosynthesis; (R)-pantothenate biosynthesis; (R)-pantothenate from (R)-pantoate and beta-alanine: step 1/1. In terms of biological role, catalyzes the condensation of pantoate with beta-alanine in an ATP-dependent reaction via a pantoyl-adenylate intermediate. This is Pantothenate synthetase from Klebsiella pneumoniae subsp. pneumoniae (strain ATCC 700721 / MGH 78578).